A 146-amino-acid chain; its full sequence is 3-dehydroquinate dehydratase (146 aa).

The Proton acceptor role is filled by Y22. Residues N73, H79, and D86 each coordinate substrate. H99 functions as the Proton donor in the catalytic mechanism. Substrate contacts are provided by residues 100–101 and R110; that span reads IS.

This sequence belongs to the type-II 3-dehydroquinase family. As to quaternary structure, homododecamer.

It carries out the reaction 3-dehydroquinate = 3-dehydroshikimate + H2O. Its pathway is metabolic intermediate biosynthesis; chorismate biosynthesis; chorismate from D-erythrose 4-phosphate and phosphoenolpyruvate: step 3/7. Catalyzes a trans-dehydration via an enolate intermediate. The sequence is that of 3-dehydroquinate dehydratase from Prochlorococcus marinus subsp. pastoris (strain CCMP1986 / NIES-2087 / MED4).